The chain runs to 423 residues: Deferrochelatase (423 aa).

Positions 1–35 form a signal peptide, tat-type signal; the sequence is MQYKDENGVNEPSRRRLLKVIGALALAGSCPVAHA. Residue 236 to 238 coordinates heme b; that stretch reads GTA. Protoporphyrin IX contacts are provided by residues 236–238 and R296; that span reads GTA. Residues H329, 334–336, and R347 contribute to the heme b site; that span reads NPR.

Homodimer. Part of a ferrous iron transporter composed of EfeU, EfeO and EfeB. However, this EfeUOB tripartite iron transporter is defective in E.coli strain K12 due to a frameshift mutation in EfeU. Heme b serves as cofactor. In terms of processing, exported by the Tat system. The position of the signal peptide cleavage has been experimentally proven. Can also be exported by the Sec system.

It localises to the periplasm. The enzyme catalyses heme b + 2 H(+) = protoporphyrin IX + Fe(2+). Its function is as follows. Involved in the recovery of exogenous heme iron. Extracts iron from heme while preserving the protoporphyrin ring intact. Also displays peroxidase activity on guaiacol in vitro. The protein is Deferrochelatase (efeB) of Escherichia coli (strain K12).